Reading from the N-terminus, the 458-residue chain is Elongation factor 1-alpha (458 aa).

Glycine 2 is modified (n,N,N-trimethylglycine). Lysine 3 is modified (N6,N6-dimethyllysine; alternate). Lysine 3 is modified (N6-methyllysine; alternate). The tr-type G domain maps to 5 to 240 (KTHVNVVVIG…DAIEPPQRPT (236 aa)). The G1 stretch occupies residues 14-21 (GHVDSGKS). 14 to 21 (GHVDSGKS) provides a ligand contact to GTP. Lysine 30 is subject to N6-methyllysine. The G2 stretch occupies residues 70-74 (GITID). Lysine 79 carries the N6,N6,N6-trimethyllysine modification. A G3 region spans residues 91–94 (DAPG). GTP contacts are provided by residues 91–95 (DAPGH) and 153–156 (NKMD). Positions 153 to 156 (NKMD) are G4. The tract at residues 192–194 (SGW) is G5. Lysine 316 carries the N6,N6-dimethyllysine; alternate modification. Position 316 is an N6-methyllysine; alternate (lysine 316). Lysine 390 is modified (N6-methyllysine).

It belongs to the TRAFAC class translation factor GTPase superfamily. Classic translation factor GTPase family. EF-Tu/EF-1A subfamily.

It is found in the cytoplasm. The protein operates within protein biosynthesis; polypeptide chain elongation. This protein promotes the GTP-dependent binding of aminoacyl-tRNA to the A-site of ribosomes during protein biosynthesis. The polypeptide is Elongation factor 1-alpha (TEF1) (Meyerozyma guilliermondii (strain ATCC 6260 / CBS 566 / DSM 6381 / JCM 1539 / NBRC 10279 / NRRL Y-324) (Yeast)).